Consider the following 317-residue polypeptide: 17-beta-hydroxysteroid dehydrogenase type 6 (317 aa).

The signal sequence occupies residues 1-17; sequence MWLYLAVLLGLYYLLRW. Residue 33 to 57 participates in NAD(+) binding; sequence FITGCDSGFGNQLARQLDLRGLRVL. Residues Asn71 and Asn161 are each glycosylated (N-linked (GlcNAc...) asparagine). A substrate-binding site is contributed by Ser164. The Proton acceptor role is filled by Tyr176.

Belongs to the short-chain dehydrogenases/reductases (SDR) family.

It is found in the microsome membrane. It localises to the endoplasmic reticulum membrane. It catalyses the reaction all-trans-retinol--[retinol-binding protein] + NAD(+) = all-trans-retinal--[retinol-binding protein] + NADH + H(+). The enzyme catalyses all-trans-retinol + NAD(+) = all-trans-retinal + NADH + H(+). The catalysed reaction is androsterone + NAD(+) = 5alpha-androstan-3,17-dione + NADH + H(+). It carries out the reaction testosterone + NAD(+) = androst-4-ene-3,17-dione + NADH + H(+). It catalyses the reaction 5alpha-androstane-3alpha,17beta-diol + NAD(+) = 17beta-hydroxy-5alpha-androstan-3-one + NADH + H(+). The enzyme catalyses 17beta-estradiol + NAD(+) = estrone + NADH + H(+). The catalysed reaction is 17beta-estradiol + NADP(+) = estrone + NADPH + H(+). It carries out the reaction 3alpha-hydroxy-5alpha-pregnan-20-one + NAD(+) = 5alpha-pregnane-3,20-dione + NADH + H(+). It catalyses the reaction 5alpha-androstane-3beta,17beta-diol + NAD(+) = 17beta-hydroxy-5alpha-androstan-3-one + NADH + H(+). The enzyme catalyses 3beta-hydroxy-5alpha-androstan-17-one + NAD(+) = 5alpha-androstan-3,17-dione + NADH + H(+). Its function is as follows. NAD-dependent oxidoreductase with broad substrate specificity that shows both oxidative and reductive activity (in vitro). Has 17-beta-hydroxysteroid dehydrogenase activity towards various steroids (in vitro). Converts 5-alpha-androstan-3-alpha,17-beta-diol to androsterone and estradiol to estrone (in vitro). Has 3-alpha-hydroxysteroid dehydrogenase activity towards androsterone (in vitro). Has retinol dehydrogenase activity towards all-trans-retinol (in vitro). Can convert androsterone to epi-androsterone. Androsterone is first oxidized to 5-alpha-androstane-3,17-dione and then reduced to epi-andosterone. Can act on both C-19 and C-21 3-alpha-hydroxysteroids. The sequence is that of 17-beta-hydroxysteroid dehydrogenase type 6 (HSD17B6) from Bos taurus (Bovine).